The primary structure comprises 461 residues: Putative cytochrome P450 132 (461 aa).

Cys-409 serves as a coordination point for heme.

The protein belongs to the cytochrome P450 family. It depends on heme as a cofactor.

This Mycobacterium tuberculosis (strain ATCC 25618 / H37Rv) protein is Putative cytochrome P450 132 (cyp132).